An 83-amino-acid chain; its full sequence is Delta-conotoxin-like MVIC (83 aa).

The signal sequence occupies residues 1–22 (MKLTCVMIVAVLFLTTWTFVTA). A propeptide spanning residues 23–49 (DDSRYGLKNLFPKARHEMKNPEASKLN) is cleaved from the precursor. 3 disulfides stabilise this stretch: cysteine 54–cysteine 69, cysteine 61–cysteine 73, and cysteine 68–cysteine 78. 4-hydroxyproline occurs at positions 56 and 65.

This sequence belongs to the conotoxin O1 superfamily. Expressed by the venom duct.

Its subcellular location is the secreted. Its function is as follows. Delta-conotoxins bind to site 6 of voltage-gated sodium channels (Nav) and inhibit the inactivation process. In Conus magus (Magical cone), this protein is Delta-conotoxin-like MVIC.